The chain runs to 165 residues: Large ribosomal subunit protein uL11A (165 aa).

N,N-dimethylproline; by NTM1 is present on Pro-2. Residues Lys-4 and Lys-11 each carry the N6,N6,N6-trimethyllysine; by RKM2 modification. Ser-25 and Ser-38 each carry phosphoserine. Arg-67 carries the N5-methylarginine; by RMT2 modification. Glycyl lysine isopeptide (Lys-Gly) (interchain with G-Cter in ubiquitin) cross-links involve residues Lys-130 and Lys-146.

The protein belongs to the universal ribosomal protein uL11 family. As to quaternary structure, component of the large ribosomal subunit (LSU). Mature yeast ribosomes consist of a small (40S) and a large (60S) subunit. The 40S small subunit contains 1 molecule of ribosomal RNA (18S rRNA) and 33 different proteins (encoded by 57 genes). The large 60S subunit contains 3 rRNA molecules (25S, 5.8S and 5S rRNA) and 46 different proteins (encoded by 81 genes). It appears that the main modified species for L12 contains 6 methyl groups, 2 on Pro-2, 3 on Lys-4 and 1 on Arg-67. Although not reproduced with a second method, methylation at Lys-11 cannot be ruled out.

The protein resides in the cytoplasm. Component of the ribosome, a large ribonucleoprotein complex responsible for the synthesis of proteins in the cell. The small ribosomal subunit (SSU) binds messenger RNAs (mRNAs) and translates the encoded message by selecting cognate aminoacyl-transfer RNA (tRNA) molecules. The large subunit (LSU) contains the ribosomal catalytic site termed the peptidyl transferase center (PTC), which catalyzes the formation of peptide bonds, thereby polymerizing the amino acids delivered by tRNAs into a polypeptide chain. The nascent polypeptides leave the ribosome through a tunnel in the LSU and interact with protein factors that function in enzymatic processing, targeting, and the membrane insertion of nascent chains at the exit of the ribosomal tunnel. In Saccharomyces cerevisiae (strain ATCC 204508 / S288c) (Baker's yeast), this protein is Large ribosomal subunit protein uL11A.